The primary structure comprises 199 residues: Protein GrpE (199 aa).

Basic and acidic residues predominate over residues 1-10 (MTNQTEKEQV). The tract at residues 1–44 (MTNQTEKEQVEQDVSQATELAQEAQEAQTQDVEPELQQNNEIDP) is disordered. Over residues 16–30 (QATELAQEAQEAQTQ) the composition is skewed to low complexity.

The protein belongs to the GrpE family. Homodimer.

Its subcellular location is the cytoplasm. Its function is as follows. Participates actively in the response to hyperosmotic and heat shock by preventing the aggregation of stress-denatured proteins, in association with DnaK and GrpE. It is the nucleotide exchange factor for DnaK and may function as a thermosensor. Unfolded proteins bind initially to DnaJ; upon interaction with the DnaJ-bound protein, DnaK hydrolyzes its bound ATP, resulting in the formation of a stable complex. GrpE releases ADP from DnaK; ATP binding to DnaK triggers the release of the substrate protein, thus completing the reaction cycle. Several rounds of ATP-dependent interactions between DnaJ, DnaK and GrpE are required for fully efficient folding. This Glaesserella parasuis serovar 5 (strain SH0165) (Haemophilus parasuis) protein is Protein GrpE.